A 186-amino-acid polypeptide reads, in one-letter code: Ribosome-recycling factor (186 aa).

It belongs to the RRF family.

The protein localises to the cytoplasm. Its function is as follows. Responsible for the release of ribosomes from messenger RNA at the termination of protein biosynthesis. May increase the efficiency of translation by recycling ribosomes from one round of translation to another. This chain is Ribosome-recycling factor, found in Cupriavidus taiwanensis (strain DSM 17343 / BCRC 17206 / CCUG 44338 / CIP 107171 / LMG 19424 / R1) (Ralstonia taiwanensis (strain LMG 19424)).